A 454-amino-acid polypeptide reads, in one-letter code: Innexin-19 (454 aa).

Residues 1–48 (MWRTPASTGPLRQDRQMFFHATLARSFINALSVRGDDDAVDRLNYYYT) are Cytoplasmic-facing. The chain crosses the membrane as a helical span at residues 49-69 (PLILAVCCLVISAKQYGGTPI). Over 70 to 118 (ECWVNPHSRESMEEYIESYCWIQNTYWIPMYENVPDDHTAREEKQIGYY) the chain is Extracellular. Residues 119 to 139 (QWVPFILIAEALMFSLPCIFW) form a helical membrane-spanning segment. Residues 140–214 (RLCSFQSGLN…SRFLSGQCLS (75 aa)) are Cytoplasmic-facing. Residues 215-235 (ILHSFTKLLYSMNVVAQFLIL) traverse the membrane as a helical segment. The Extracellular segment spans residues 236 to 300 (NACLKSSDFL…ALLINIINEK (65 aa)). The helical transmembrane segment at 301 to 321 (VFAFLWCWYMILAIITTCSFI) threads the bilayer. At 322-454 (YWIANSFIHS…SNPGQTKSFL (133 aa)) the chain is on the cytoplasmic side.

It belongs to the pannexin family. As to expression, specifically expressed in sensory neurons and interneurons in the head and tail. Expressed in neurons AWC, ASH, AFD, ASI, ADL, ASK, BAG, AWB, and ADF (head sensory neurons); ADA, AIZ, RIC, AIY, and AIM (head interneurons); PHA and PHB (tail sensory neurons); and PVC and PVQ (tail interneurons).

The protein resides in the cell membrane. Its subcellular location is the cell junction. It is found in the gap junction. Its function is as follows. Structural component of the gap junctions that specifically coordinates left-right asymmetry in the developing nervous system. Acts by forming gap junction network linking embryonic neurons and providing electrical coupling between cells, leading to promote or inhibit AWC signaling. Required for the left and right AWC olfactory neurons to establish asymmetric patterns of gene expression during embryogenesis. Acts autonomously. The sequence is that of Innexin-19 (inx-19) from Caenorhabditis elegans.